A 1405-amino-acid chain; its full sequence is DNA-directed RNA polymerase subunit beta' (1405 aa).

Zn(2+)-binding residues include Cys70, Cys72, Cys85, and Cys88. Mg(2+)-binding residues include Asp458, Asp460, and Asp462. 4 residues coordinate Zn(2+): Cys813, Cys887, Cys894, and Cys897.

This sequence belongs to the RNA polymerase beta' chain family. As to quaternary structure, the RNAP catalytic core consists of 2 alpha, 1 beta, 1 beta' and 1 omega subunit. When a sigma factor is associated with the core the holoenzyme is formed, which can initiate transcription. Mg(2+) is required as a cofactor. The cofactor is Zn(2+).

The catalysed reaction is RNA(n) + a ribonucleoside 5'-triphosphate = RNA(n+1) + diphosphate. DNA-dependent RNA polymerase catalyzes the transcription of DNA into RNA using the four ribonucleoside triphosphates as substrates. This is DNA-directed RNA polymerase subunit beta' from Albidiferax ferrireducens (strain ATCC BAA-621 / DSM 15236 / T118) (Rhodoferax ferrireducens).